The chain runs to 349 residues: Short-wave-sensitive opsin 1 (349 aa).

Residues 1–34 are Extracellular-facing; the sequence is MSKMSEEEEFLLFKNISLVGPWDGPQYHLAPVWA. An N-linked (GlcNAc...) asparagine glycan is attached at Asn-15. Residues 35 to 59 traverse the membrane as a helical segment; sequence FHLQAVFMGFVFFVGTPLNATVLVA. The Cytoplasmic portion of the chain corresponds to 60-71; that stretch reads TLRYRKLRQPLN. The chain crosses the membrane as a helical span at residues 72–97; that stretch reads YILVNVSLGGFIYCIFSVFIVFITSC. Topologically, residues 98 to 111 are extracellular; the sequence is YGYFVFGRHVCALE. An intrachain disulfide couples Cys-108 to Cys-185. A helical membrane pass occupies residues 112–131; sequence AFLGCTAGLVTGWSLAFLAF. At 132 to 150 the chain is on the cytoplasmic side; it reads ERYIIICKPFGNFRFSSKH. The helical transmembrane segment at 151 to 174 threads the bilayer; that stretch reads ALMVVVATWTIGIGVSIPPFFGWS. Over 175-200 the chain is Extracellular; it reads RFVPEGLQCSCGPDWYTVGTKYYSEY. The helical transmembrane segment at 201-228 threads the bilayer; that stretch reads YTWFLFIFCYIVPLSLICFSYSQLLGAL. Topologically, residues 229-250 are cytoplasmic; sequence RAVAAQQQESASTQKAEREVSH. The chain crosses the membrane as a helical span at residues 251–274; it reads MVVVMVGSFCLCYTPYAALAMYIV. Residues 275 to 282 lie on the Extracellular side of the membrane; that stretch reads NNRNHGVD. Residues 283–307 form a helical membrane-spanning segment; that stretch reads LRLVTIPAFFSKSACVYNPIIYCFM. Position 294 is an N6-(retinylidene)lysine (Lys-294). The Cytoplasmic segment spans residues 308–349; sequence NKQFRACIMEMVCGKPMTDESELSSSQKTEVSTVSSSQVGPN. The disordered stretch occupies residues 327–349; the sequence is ESELSSSQKTEVSTVSSSQVGPN. A compositionally biased stretch (polar residues) spans 330 to 349; the sequence is LSSSQKTEVSTVSSSQVGPN.

It belongs to the G-protein coupled receptor 1 family. Opsin subfamily. Post-translationally, phosphorylated on some or all of the serine and threonine residues present in the C-terminal region.

Its subcellular location is the cell membrane. It is found in the photoreceptor inner segment. The protein resides in the cell projection. It localises to the cilium. The protein localises to the photoreceptor outer segment. Its subcellular location is the cytoplasm. It is found in the perinuclear region. Functionally, visual pigments are the light-absorbing molecules that mediate vision. They consist of an apoprotein, opsin, covalently linked to cis-retinal. Required for the maintenance of cone outer segment organization in the ventral retina, but not essential for the maintenance of functioning cone photoreceptors. Involved in ensuring correct abundance and localization of retinal membrane proteins. May increase spectral sensitivity in dim light. The chain is Short-wave-sensitive opsin 1 (OPN1SW) from Bos taurus (Bovine).